The chain runs to 411 residues: Tyrosine--tRNA ligase (411 aa).

Position 34 (Tyr-34) interacts with L-tyrosine. The 'HIGH' region signature appears at 39–48 (CTATSLHIGS). Residues Tyr-171 and Gln-175 each coordinate L-tyrosine. Positions 231–235 (KMGKT) match the 'KMSKS' region motif. Lys-234 is an ATP binding site. Residues 345 to 411 (ISAYKLFYNV…GKKRHILVKV (67 aa)) enclose the S4 RNA-binding domain.

This sequence belongs to the class-I aminoacyl-tRNA synthetase family. TyrS type 1 subfamily. Homodimer.

The protein resides in the cytoplasm. It catalyses the reaction tRNA(Tyr) + L-tyrosine + ATP = L-tyrosyl-tRNA(Tyr) + AMP + diphosphate + H(+). Its function is as follows. Catalyzes the attachment of tyrosine to tRNA(Tyr) in a two-step reaction: tyrosine is first activated by ATP to form Tyr-AMP and then transferred to the acceptor end of tRNA(Tyr). The chain is Tyrosine--tRNA ligase from Rickettsia typhi (strain ATCC VR-144 / Wilmington).